The chain runs to 255 residues: ATP synthase subunit a (255 aa).

Helical transmembrane passes span 28–48 (VDSL…FWLG), 86–106 (IAPL…MDLV), 125–145 (ILPT…FFLI), 164–184 (FHPF…IELI), 203–223 (LIFI…GTPW), and 224–244 (AIFH…LTVV).

Belongs to the ATPase A chain family. As to quaternary structure, F-type ATPases have 2 components, CF(1) - the catalytic core - and CF(0) - the membrane proton channel. CF(1) has five subunits: alpha(3), beta(3), gamma(1), delta(1), epsilon(1). CF(0) has three main subunits: a(1), b(2) and c(9-12). The alpha and beta chains form an alternating ring which encloses part of the gamma chain. CF(1) is attached to CF(0) by a central stalk formed by the gamma and epsilon chains, while a peripheral stalk is formed by the delta and b chains.

The protein localises to the cell inner membrane. Its function is as follows. Key component of the proton channel; it plays a direct role in the translocation of protons across the membrane. The polypeptide is ATP synthase subunit a (Alkalilimnicola ehrlichii (strain ATCC BAA-1101 / DSM 17681 / MLHE-1)).